A 356-amino-acid polypeptide reads, in one-letter code: Phospho-N-acetylmuramoyl-pentapeptide-transferase (356 aa).

The next 9 helical transmembrane spans lie at 27–47 (AAAITALLIGLIFGPRFIGWM), 74–94 (MGGLMILIAVSISLFLWMDFA), 97–117 (YVWACIAVMLGFGVIGFIDDY), 128–148 (VSGKVRLLWEFGIAFFACYLI), 164–184 (PVIDLGWFYYPFAAFVIVGTA), 201–221 (VIIASLAFFVISYVVGNAVFA), 241–261 (AIIGAGFAFLWFNAPPAAIFM), 284–304 (IVLGIVGGLFVAEALSVIIQV), and 333–353 (TVVIRFWIISFALALLGLATL).

The protein belongs to the glycosyltransferase 4 family. MraY subfamily. Mg(2+) serves as cofactor.

The protein resides in the cell inner membrane. The enzyme catalyses UDP-N-acetyl-alpha-D-muramoyl-L-alanyl-gamma-D-glutamyl-meso-2,6-diaminopimeloyl-D-alanyl-D-alanine + di-trans,octa-cis-undecaprenyl phosphate = di-trans,octa-cis-undecaprenyl diphospho-N-acetyl-alpha-D-muramoyl-L-alanyl-D-glutamyl-meso-2,6-diaminopimeloyl-D-alanyl-D-alanine + UMP. It participates in cell wall biogenesis; peptidoglycan biosynthesis. In terms of biological role, catalyzes the initial step of the lipid cycle reactions in the biosynthesis of the cell wall peptidoglycan: transfers peptidoglycan precursor phospho-MurNAc-pentapeptide from UDP-MurNAc-pentapeptide onto the lipid carrier undecaprenyl phosphate, yielding undecaprenyl-pyrophosphoryl-MurNAc-pentapeptide, known as lipid I. The chain is Phospho-N-acetylmuramoyl-pentapeptide-transferase from Zymomonas mobilis subsp. mobilis (strain ATCC 31821 / ZM4 / CP4).